The sequence spans 418 residues: Serine--tRNA ligase (418 aa).

Position 227–229 (227–229 (TSE)) interacts with L-serine. ATP-binding positions include 258–260 (RRE) and Val-274. Glu-281 lines the L-serine pocket. 345–348 (ELTS) lines the ATP pocket. Thr-380 provides a ligand contact to L-serine.

The protein belongs to the class-II aminoacyl-tRNA synthetase family. Type-1 seryl-tRNA synthetase subfamily. In terms of assembly, homodimer. The tRNA molecule binds across the dimer.

The protein resides in the cytoplasm. It carries out the reaction tRNA(Ser) + L-serine + ATP = L-seryl-tRNA(Ser) + AMP + diphosphate + H(+). The catalysed reaction is tRNA(Sec) + L-serine + ATP = L-seryl-tRNA(Sec) + AMP + diphosphate + H(+). It participates in aminoacyl-tRNA biosynthesis; selenocysteinyl-tRNA(Sec) biosynthesis; L-seryl-tRNA(Sec) from L-serine and tRNA(Sec): step 1/1. In terms of biological role, catalyzes the attachment of serine to tRNA(Ser). Is also able to aminoacylate tRNA(Sec) with serine, to form the misacylated tRNA L-seryl-tRNA(Sec), which will be further converted into selenocysteinyl-tRNA(Sec). The sequence is that of Serine--tRNA ligase from Rhodococcus jostii (strain RHA1).